The primary structure comprises 280 residues: MATNFLMHEKIWFDKFKYDDAERKFYEQMNGPVAGSSRQENGASVILRDIARARENIQKSLAGSSGPGASSGPSGDHSELVTRIASLEVENQSLRGVVQDLQQAVSKLEARLSALEKSSPAHRATTPQTQHVSPMRQVEPPSRKAATATEDDEDDDIDLFGSDEEEDKEATRLREERLRQYAEKKAKKPALVAKSSILLDVKPWDDETDMAQLEACVRSVQLDGLVWGSSKLVPVGYGIRKLQIQCVVEDDKVGTDQLEEEITKFEEHVQSVDIAAFNKI.

N-acetylalanine is present on Ala2. Residue Lys17 is modified to N6-acetyllysine. Residues Ser37, Ser44, Ser60, Ser86, and Ser106 each carry the phosphoserine modification. Lys107 is modified (N6-acetyllysine). The tract at residues 113–171 (SALEKSSPAHRATTPQTQHVSPMRQVEPPSRKAATATEDDEDDDIDLFGSDEEEDKEAT) is disordered. At Lys117 the chain carries N6-acetyllysine; alternate. Lys117 carries the post-translational modification N6-succinyllysine; alternate. Residue Ser119 is modified to Phosphoserine. Thr129 is subject to Phosphothreonine. Phosphoserine is present on Ser133. At Thr147 the chain carries Phosphothreonine. Residues 149 to 168 (TEDDEDDDIDLFGSDEEEDK) are compositionally biased toward acidic residues. Ser162 is subject to Phosphoserine; by CK2.

The protein belongs to the EF-1-beta/EF-1-delta family. EF-1 is composed of 4 subunits: alpha, beta, delta, and gamma.

In terms of biological role, EF-1-beta and EF-1-delta stimulate the exchange of GDP bound to EF-1-alpha to GTP. This chain is Elongation factor 1-delta (EEF1D), found in Bos taurus (Bovine).